The sequence spans 423 residues: Serine--tRNA ligase (423 aa).

Position 230-232 (230-232) interacts with L-serine; it reads TAE. 261 to 263 contacts ATP; it reads RSE. Residue Glu284 participates in L-serine binding. 348–351 contributes to the ATP binding site; it reads EISS. Ser383 contacts L-serine.

Belongs to the class-II aminoacyl-tRNA synthetase family. Type-1 seryl-tRNA synthetase subfamily. In terms of assembly, homodimer. The tRNA molecule binds across the dimer.

Its subcellular location is the cytoplasm. It catalyses the reaction tRNA(Ser) + L-serine + ATP = L-seryl-tRNA(Ser) + AMP + diphosphate + H(+). The catalysed reaction is tRNA(Sec) + L-serine + ATP = L-seryl-tRNA(Sec) + AMP + diphosphate + H(+). It functions in the pathway aminoacyl-tRNA biosynthesis; selenocysteinyl-tRNA(Sec) biosynthesis; L-seryl-tRNA(Sec) from L-serine and tRNA(Sec): step 1/1. Functionally, catalyzes the attachment of serine to tRNA(Ser). Is also able to aminoacylate tRNA(Sec) with serine, to form the misacylated tRNA L-seryl-tRNA(Sec), which will be further converted into selenocysteinyl-tRNA(Sec). The protein is Serine--tRNA ligase of Levilactobacillus brevis (strain ATCC 367 / BCRC 12310 / CIP 105137 / JCM 1170 / LMG 11437 / NCIMB 947 / NCTC 947) (Lactobacillus brevis).